Reading from the N-terminus, the 90-residue chain is Small ribosomal subunit protein uS15 (90 aa).

The protein belongs to the universal ribosomal protein uS15 family. Part of the 30S ribosomal subunit. Forms a bridge to the 50S subunit in the 70S ribosome, contacting the 23S rRNA.

One of the primary rRNA binding proteins, it binds directly to 16S rRNA where it helps nucleate assembly of the platform of the 30S subunit by binding and bridging several RNA helices of the 16S rRNA. Its function is as follows. Forms an intersubunit bridge (bridge B4) with the 23S rRNA of the 50S subunit in the ribosome. This chain is Small ribosomal subunit protein uS15, found in Wolinella succinogenes (strain ATCC 29543 / DSM 1740 / CCUG 13145 / JCM 31913 / LMG 7466 / NCTC 11488 / FDC 602W) (Vibrio succinogenes).